The sequence spans 646 residues: Nucleoside triphosphatase I (646 aa).

The 166-residue stretch at 48–213 folds into the Helicase ATP-binding domain; the sequence is FIGLKNLNSM…NNLIGLLRPN (166 aa). ATP is bound at residue 61–68; that stretch reads WDTGMGKT. The DEXH box signature appears at 151-154; that stretch reads DEVH. In terms of domain architecture, Helicase C-terminal spans 377–540; sequence YIEACRIILN…KINVVFDLLK (164 aa). Residues 466–532 are binding to the cap-specific mRNA (nucleoside-2'-O-)-methyltransferase; the sequence is DIIILDMPWN…DIIKDKQSKI (67 aa).

This sequence belongs to the helicase family. NPH I subfamily. As to quaternary structure, monomer. Interacts (via C-terminus) with RAP94 (via N-terminus). Interacts with the cap-specific mRNA (nucleoside-2'-O-)-methyltransferase.

Its subcellular location is the virion. It carries out the reaction a ribonucleoside 5'-triphosphate + H2O = a ribonucleoside 5'-diphosphate + phosphate + H(+). Its function is as follows. DNA-dependent ATPase required for providing the needed energy to achieve the termination of early transcripts. Acts in concert with the RAP94 subunit of the virion RNA polymerase and the capping enzyme/VTF to catalyze release of UUUUUNU-containing nascent RNA from the elongation complex. NPH-I must bind ssDNA in order to exhibit ATPase activity. The polypeptide is Nucleoside triphosphatase I (NPH1) (Heliothis armigera entomopoxvirus (HaEPV)).